We begin with the raw amino-acid sequence, 526 residues long: Amine oxidase [flavin-containing] A (526 aa).

Residue Met1 is modified to N-acetylmethionine. The Cytoplasmic segment spans residues 1–497 (MTDLEKPSIT…HTFLERNLPS (497 aa)). Ser383 carries the post-translational modification Phosphoserine. Cys406 carries the S-8alpha-FAD cysteine modification. A helical; Anchor for type IV membrane protein membrane pass occupies residues 498–518 (VPGLLKITGFSTSVALLCFVL). The Mitochondrial intermembrane segment spans residues 519-526 (YKFKQPQS). Positions 520 to 522 (KFK) are interaction with membrane phospholipid headgroups.

It belongs to the flavin monoamine oxidase family. In terms of assembly, monomer, homo- or heterodimer (containing two subunits of similar size). Each subunit contains a covalently bound flavin. Enzymatically active as monomer. The cofactor is FAD.

The protein localises to the mitochondrion outer membrane. It carries out the reaction a secondary aliphatic amine + O2 + H2O = a primary amine + an aldehyde + H2O2. It catalyses the reaction a primary methyl amine + O2 + H2O = an aldehyde + H2O2 + NH4(+). The catalysed reaction is serotonin + O2 + H2O = (5-hydroxyindol-3-yl)acetaldehyde + H2O2 + NH4(+). The enzyme catalyses (R)-adrenaline + O2 + H2O = (R)-3,4-dihydroxymandelaldehyde + methylamine + H2O2. It carries out the reaction dopamine + O2 + H2O = 3,4-dihydroxyphenylacetaldehyde + H2O2 + NH4(+). It catalyses the reaction tyramine + O2 + H2O = (4-hydroxyphenyl)acetaldehyde + H2O2 + NH4(+). The catalysed reaction is (R)-noradrenaline + O2 + H2O = (R)-3,4-dihydroxymandelaldehyde + H2O2 + NH4(+). The enzyme catalyses kynuramine + O2 + H2O = 3-(2-aminophenyl)-3-oxopropanal + H2O2 + NH4(+). It carries out the reaction tryptamine + O2 + H2O = indole-3-acetaldehyde + H2O2 + NH4(+). It catalyses the reaction 2-phenylethylamine + O2 + H2O = 2-phenylacetaldehyde + H2O2 + NH4(+). In terms of biological role, catalyzes the oxidative deamination of biogenic and xenobiotic amines and has important functions in the metabolism of neuroactive and vasoactive amines in the central nervous system and peripheral tissues. Preferentially oxidizes serotonin. Also catalyzes the oxidative deamination of kynuramine to 3-(2-aminophenyl)-3-oxopropanal that can spontaneously condense to 4-hydroxyquinoline. In Mus musculus (Mouse), this protein is Amine oxidase [flavin-containing] A.